Here is a 354-residue protein sequence, read N- to C-terminus: Uroporphyrinogen decarboxylase (354 aa).

Residues 27–31, aspartate 77, tyrosine 154, threonine 209, and histidine 327 contribute to the substrate site; that span reads RQAGR.

The protein belongs to the uroporphyrinogen decarboxylase family. Homodimer.

The protein resides in the cytoplasm. It catalyses the reaction uroporphyrinogen III + 4 H(+) = coproporphyrinogen III + 4 CO2. It participates in porphyrin-containing compound metabolism; protoporphyrin-IX biosynthesis; coproporphyrinogen-III from 5-aminolevulinate: step 4/4. Its function is as follows. Catalyzes the decarboxylation of four acetate groups of uroporphyrinogen-III to yield coproporphyrinogen-III. This chain is Uroporphyrinogen decarboxylase, found in Mannheimia succiniciproducens (strain KCTC 0769BP / MBEL55E).